The following is a 121-amino-acid chain: Ribosome-binding factor A (121 aa).

This sequence belongs to the RbfA family. As to quaternary structure, monomer. Binds 30S ribosomal subunits, but not 50S ribosomal subunits or 70S ribosomes.

It is found in the cytoplasm. In terms of biological role, one of several proteins that assist in the late maturation steps of the functional core of the 30S ribosomal subunit. Associates with free 30S ribosomal subunits (but not with 30S subunits that are part of 70S ribosomes or polysomes). Required for efficient processing of 16S rRNA. May interact with the 5'-terminal helix region of 16S rRNA. The sequence is that of Ribosome-binding factor A from Lactobacillus helveticus (strain DPC 4571).